A 240-amino-acid polypeptide reads, in one-letter code: Epoxyqueuosine reductase QueH (240 aa).

[4Fe-4S] cluster contacts are provided by Cys-43, Cys-44, Cys-129, and Cys-132. Cys-211 and Cys-213 are oxidised to a cystine.

The protein belongs to the QueH family.

It carries out the reaction epoxyqueuosine(34) in tRNA + AH2 = queuosine(34) in tRNA + A + H2O. The protein operates within tRNA modification; tRNA-queuosine biosynthesis. In terms of biological role, catalyzes the conversion of epoxyqueuosine (oQ) to queuosine (Q), which is a hypermodified base found in the wobble positions of tRNA(Asp), tRNA(Asn), tRNA(His) and tRNA(Tyr). The chain is Epoxyqueuosine reductase QueH from Staphylococcus aureus (strain Mu50 / ATCC 700699).